An 893-amino-acid polypeptide reads, in one-letter code: Phosphatidate phosphatase LPIN2 (893 aa).

Positions 1–108 (MNYVGQLAGQ…LPAYLATSPI (108 aa)) are N-LIP. Phosphoserine is present on serine 106. The tract at residues 122–216 (LVKSSGNERP…EDYKEPSLFH (95 aa)) is disordered. The span at 123 to 151 (VKSSGNERPAQSSDVSHTLESEAVFTQSS) shows a compositional bias: polar residues. The span at 152–162 (VKKKKRRRKKC) shows a compositional bias: basic residues. Positions 153–158 (KKKKRR) match the Nuclear localization signal motif. Residues serine 174, serine 186, and serine 187 each carry the phosphoserine modification. Basic and acidic residues predominate over residues 204–213 (LKEEDYKEPS). Phosphoserine is present on residues serine 243 and serine 303. Disordered regions lie at residues 357 to 400 (LLDA…PDDI) and 417 to 456 (FPKS…TECL). A compositionally biased stretch (low complexity) spans 360 to 371 (ADPVPSPSAEAP). Residues 384–393 (KKKGVHKRSQ) are compositionally biased toward basic residues. The span at 423–445 (DPGSRQWPESDTFSGSQSPQSVG) shows a compositional bias: polar residues. At serine 563 the chain carries Phosphoserine. The disordered stretch occupies residues 568–611 (LPETKEGKSEVPPANDLPSNAEEPTSARPAENDTSSDEGSQELE). Over residues 601 to 611 (TSSDEGSQELE) the composition is skewed to acidic residues. Residues 632 to 834 (YKKSLRLSSD…RIFTVNPKGE (203 aa)) form a C-LIP region. Positions 686-690 (DIDGT) match the DXDXT motif motif. The LXXIL motif motif lies at 697–701 (LGQIL).

Belongs to the lipin family. Requires Mg(2+) as cofactor. Expressed at high level in liver and to some extend in lung, kidney, placenta, spleen, thymus, lymph node, prostate, testes, small intestine, and colon. Expressed also in circulating red blood cells and site of lymphopoiesis.

The protein localises to the nucleus. It localises to the cytoplasm. It is found in the cytosol. Its subcellular location is the endoplasmic reticulum membrane. The catalysed reaction is a 1,2-diacyl-sn-glycero-3-phosphate + H2O = a 1,2-diacyl-sn-glycerol + phosphate. Its activity is regulated as follows. Inhibited by N-ethylmaleimide. In terms of biological role, acts as a magnesium-dependent phosphatidate phosphatase enzyme which catalyzes the conversion of phosphatidic acid to diacylglycerol during triglyceride, phosphatidylcholine and phosphatidylethanolamine biosynthesis in the endoplasmic reticulum membrane. Plays important roles in controlling the metabolism of fatty acids at different levels. Also acts as a nuclear transcriptional coactivator for PPARGC1A to modulate lipid metabolism. This Mus musculus (Mouse) protein is Phosphatidate phosphatase LPIN2.